The sequence spans 113 residues: Protein translation factor SUI1 homolog 2 (113 aa).

Ser-2 is subject to N-acetylserine.

Belongs to the SUI1 family.

Functionally, probably involved in translation. The protein is Protein translation factor SUI1 homolog 2 of Arabidopsis thaliana (Mouse-ear cress).